Here is a 321-residue protein sequence, read N- to C-terminus: Necdin (321 aa).

Residues 1–96 form a disordered region; it reads MSEQSKDLSD…QPGPAPPAPA (96 aa). Low complexity predominate over residues 20–35; the sequence is SEVHSSPGVSEGVPPS. The region spanning 98 to 297 is the MAGE domain; that stretch reads LVQKAHELMW…QAWPSRYREA (200 aa).

In terms of assembly, binds to the transactivation domains of E2F1 and p53. Binds also SV40 large T antigen and adenovirus E1A. Interacts with nucleobindin 1 and 2. As to expression, almost ubiquitous. Detected in fetal brain, lung, liver and kidney; in adult heart, brain, placenta, lung, liver, skeletal muscle, kidney, pancreas, spleen, thymus, prostate, testis, ovary, small intestine and colon. Not detected in peripheral blood leukocytes. In brain, restricted to post-mitotic neurons.

The protein localises to the perikaryon. It localises to the nucleus. In terms of biological role, growth suppressor that facilitates the entry of the cell into cell cycle arrest. Functionally similar to the retinoblastoma protein it binds to and represses the activity of cell-cycle-promoting proteins such as SV40 large T antigen, adenovirus E1A, and the transcription factor E2F. Necdin also interacts with p53 and works in an additive manner to inhibit cell growth. Also functions as a transcription factor and directly binds to specific guanosine-rich DNA sequences. The sequence is that of Necdin (NDN) from Homo sapiens (Human).